The chain runs to 425 residues: uncharacterized protein (425 aa).

The region spanning arginine 55–leucine 181 is the HD domain.

This is an uncharacterized protein from Mycoplasma pneumoniae (strain ATCC 29342 / M129 / Subtype 1) (Mycoplasmoides pneumoniae).